The primary structure comprises 174 residues: MAVLSTIYSITRASTPTMASLTNDSPSPLPSSSPSKLPSPTSPSKKPLKLRQVSKQMGSQNQQRRGNKPSIAQIERAFGSGSYRDSEGEMDMNTVFDELLLGHANKFESKIEKKLREIGEIFVARTEPKLRSSGKPVLMFTIQWILPIWIMSLLVACGVIKLPFSIPFLDDLIM.

A chloroplast-targeting transit peptide spans 1–54; sequence MAVLSTIYSITRASTPTMASLTNDSPSPLPSSSPSKLPSPTSPSKKPLKLRQVS. A compositionally biased stretch (polar residues) spans 14 to 24; it reads STPTMASLTND. The tract at residues 14-71 is disordered; that stretch reads STPTMASLTNDSPSPLPSSSPSKLPSPTSPSKKPLKLRQVSKQMGSQNQQRRGNKPSI. A compositionally biased stretch (low complexity) spans 30 to 45; it reads PSSSPSKLPSPTSPSK. Over residues 53–64 the composition is skewed to polar residues; it reads VSKQMGSQNQQR. A helical membrane pass occupies residues 140-160; it reads FTIQWILPIWIMSLLVACGVI.

It localises to the plastid. The protein localises to the chloroplast thylakoid membrane. Its function is as follows. Probable subunit of the chloroplast NAD(P)H dehydrogenase (NDH) complex of the photosynthetic electron transport chain. Required for both formation and activity of NDH. May function in assembly or stabilization of the NDH complex. This chain is Probable NAD(P)H dehydrogenase subunit CRR3, chloroplastic, found in Arabidopsis thaliana (Mouse-ear cress).